Here is a 316-residue protein sequence, read N- to C-terminus: D-alanine--D-alanine ligase (316 aa).

The ATP-grasp domain maps to 109 to 304; sequence KRLWRGMDLP…FDEMVLQILA (196 aa). Position 135–190 (135–190) interacts with ATP; it reads AADLGLPLIVKPAREGSSLGMMKVESIEALQSAYREAVIFDTAVFAERWLPGAEYT. 3 residues coordinate Mg(2+): aspartate 258, glutamate 271, and asparagine 273.

It belongs to the D-alanine--D-alanine ligase family. The cofactor is Mg(2+). Mn(2+) is required as a cofactor.

Its subcellular location is the cytoplasm. The enzyme catalyses 2 D-alanine + ATP = D-alanyl-D-alanine + ADP + phosphate + H(+). It participates in cell wall biogenesis; peptidoglycan biosynthesis. Its function is as follows. Cell wall formation. The protein is D-alanine--D-alanine ligase of Nitrosococcus oceani (strain ATCC 19707 / BCRC 17464 / JCM 30415 / NCIMB 11848 / C-107).